The following is a 457-amino-acid chain: tRNA-2-methylthio-N(6)-dimethylallyladenosine synthase (457 aa).

In terms of domain architecture, MTTase N-terminal spans lysine 3 to glutamate 120. Cysteine 12, cysteine 49, cysteine 83, cysteine 157, cysteine 161, and cysteine 164 together coordinate [4Fe-4S] cluster. The Radical SAM core domain maps to arginine 143–arginine 377. One can recognise a TRAM domain in the interval aspartate 380–leucine 447.

Belongs to the methylthiotransferase family. MiaB subfamily. As to quaternary structure, monomer. [4Fe-4S] cluster is required as a cofactor.

The protein resides in the cytoplasm. It carries out the reaction N(6)-dimethylallyladenosine(37) in tRNA + (sulfur carrier)-SH + AH2 + 2 S-adenosyl-L-methionine = 2-methylsulfanyl-N(6)-dimethylallyladenosine(37) in tRNA + (sulfur carrier)-H + 5'-deoxyadenosine + L-methionine + A + S-adenosyl-L-homocysteine + 2 H(+). Catalyzes the methylthiolation of N6-(dimethylallyl)adenosine (i(6)A), leading to the formation of 2-methylthio-N6-(dimethylallyl)adenosine (ms(2)i(6)A) at position 37 in tRNAs that read codons beginning with uridine. The chain is tRNA-2-methylthio-N(6)-dimethylallyladenosine synthase from Paraburkholderia xenovorans (strain LB400).